The primary structure comprises 770 residues: Signal transducer and activator of transcription 3 (770 aa).

Ala-2 is modified (N-acetylalanine). Lys-49 and Lys-87 each carry N6-acetyllysine. The Essential for nuclear import motif lies at 150–162 (DVRKRVQDLEQKM). Positions 580–670 (WNEGYIMGFI…DATNILVSPL (91 aa)) constitute an SH2 domain. An allysine; alternate mark is found at Lys-601, Lys-615, and Lys-631. An N6-acetyllysine; alternate mark is found at Lys-601, Lys-615, and Lys-631. Residue Tyr-640 is modified to Phosphotyrosine; by TYK2. The residue at position 685 (Lys-685) is an Allysine; alternate. Lys-685 is modified (N6-acetyllysine; alternate). The residue at position 704 (Pro-704) is a Phosphotyrosine. Tyr-705 is subject to Phosphotyrosine; by FER and PTK6. N6-acetyllysine is present on Lys-707. Thr-714 carries the phosphothreonine modification. Ser-727 bears the Phosphoserine; by DYRK2, NLK, NEK6, IRAK1, RPS6KA5, ZIPK/DAPK3 and PKC/PRKCE mark.

The protein belongs to the transcription factor STAT family. In terms of assembly, forms a homodimer or a heterodimer with a related family member (at least STAT1). Component of a promoter-binding complex composed of STAT3, NFATC3 and NFATC4; complex formation is enhanced by calcineurin. Interacts with IL31RA, NCOA1, PELP1, SIPAR, SOCS7, STATIP1 and TMF1. Interacts with IL23R in presence of IL23. Interacts (via SH2 domain) with NLK. Interacts with ARL2BP; the interaction is enhanced by LIF and JAK1 expression. Interacts with KPNA4 and KPNA5; KPNA4 may be the primary mediator of nuclear import. Interacts with CAV2; the interaction is increased on insulin-induced tyrosine phosphorylation of CAV2 and leads to STAT3 activation. Interacts with ARL2BP; interaction is enhanced with ARL2. Interacts with NEK6. Binds to CDK9 when activated and nuclear. Interacts with BMX. Interacts with ZIPK/DAPK3. Interacts with PIAS3; the interaction occurs on stimulation by IL6, CNTF or OSM and inhibits the DNA binding activity of STAT3. In prostate cancer cells, interacts with PRKCE and promotes DNA binding activity of STAT3. Interacts with STMN3, antagonizing its microtubule-destabilizing activity. Interacts with the 'Lys-129' acetylated form of BIRC5/survivin. Interacts with FER. Interacts (via SH2 domain) with EIF2AK2/PKR (via the kinase catalytic domain). Interacts with INPP5F; the interaction is independent of STAT3 Tyr-705 phosphorylation status. Interacts with FGFR4. Interacts with OCIAD1. Interacts with OCIAD2. Interacts (unphosphorylated or phosphorylated at Ser-727) with PHB1. Interacts and may form heterodimers with NHLH1. Found in a complex with SLC39A6, SLC39A10 and with the 'Ser-727' phosphorylated form of STAT3 throughout mitosis. Interacts (when phosphorylated at Tyr-705) with CD274/PD-L1; promoting nuclear translocation of CD274/PD-L1. Interacts (when acetylated) with EP300 (via bromo domain); interaction takes place following STAT3 acetylation by EP300 and promotes enhanceosome assembly. Interacts (when acetylated) with BRD2 (via bromo domain); interaction promotes STAT3 recruitment to chromatin and T-helper Th17 cell differentiation. Interacts with FAM220A/SIPAR; the interaction occurs in both the nucleus and the cytoplasm, is enhanced by IL6 and promotes STAT3 dephosphorylation. Interacts in both unphosphorylated and phosphorylated forms with FAM220A but interacts preferentially in the phosphorylated form in the nucleus. Interacts with PTPN2; the interaction is promoted by FAM220A and leads to STAT3 dephosphorylation which negatively regulates STAT3 transcriptional activator activity. (Microbial infection) Interacts with HCV core protein. As to quaternary structure, (Microbial infection) Interacts with S.typhimurium SarA. In terms of assembly, (Microbial infection) Interacts with human cytomegalovirus (HHV-5) immediate early protein IE1; this interaction leads to STAT3 nuclear accumulation and disruption of IL6-induced STAT3 phosphorylation. Tyrosine phosphorylated upon stimulation with EGF. Tyrosine phosphorylated in response to constitutively activated FGFR1, FGFR2, FGFR3 and FGFR4. Activated through tyrosine phosphorylation by BMX. Tyrosine phosphorylated in response to IL6, IL11, LIF, CNTF, KITLG/SCF, CSF1, EGF, PDGF, IFN-alpha, LEP and OSM. Activated KIT promotes phosphorylation on tyrosine residues and subsequent translocation to the nucleus. Phosphorylated on serine upon DNA damage, probably by ATM or ATR. Serine phosphorylation is important for the formation of stable DNA-binding STAT3 homodimers and maximal transcriptional activity. ARL2BP may participate in keeping the phosphorylated state of STAT3 within the nucleus. Upon LPS challenge, phosphorylated within the nucleus by IRAK1. Upon erythropoietin treatment, phosphorylated on Ser-727 by RPS6KA5. Dephosphorylation on tyrosine residues by PTPN2 negatively regulates IL6/interleukin-6 signaling. Phosphorylation at Tyr-705 by PTK6, isoform M2 of PKM (PKM2) or FER leads to an increase of its transcriptional activity. Phosphorylation at Tyr-705 is increased in the presence of calcineurin. Phosphorylation at Tyr-640 by TYK2 negatively regulates transcriptional activity. Post-translationally, acetylated on lysine residues by EP300/p300, promoting its activation. Acetylation at Lys-49 and Lys-87 by EP300/p300 promotes its activation. Acetylation at Lys-87 by EP300/p300 promotes its association with BRD2 and recruitment to chromatin. Deacetylated at Lys-49 and Lys-87 by HDAC1. Acetylation at Lys-685 by EP300/p300 promotes its homodimerization and activation. Deacetylated at Lys-685 by HDAC3. Acetylated on lysine residues by CREBBP. Deacetylation by LOXL3 leads to disrupt STAT3 dimerization and inhibit STAT3 transcription activity. Oxidation of lysine residues to allysine on STAT3 preferentially takes place on lysine residues that are acetylated. In terms of processing, some lysine residues are oxidized to allysine by LOXL3, leading to disrupt STAT3 dimerization and inhibit STAT3 transcription activity. Oxidation of lysine residues to allysine on STAT3 preferentially takes place on lysine residues that are acetylated. (Microbial infection) Phosphorylated on Tyr-705 in the presence of S.typhimurium SarA. Heart, brain, placenta, lung, liver, skeletal muscle, kidney and pancreas. Expressed in naive CD4(+) T cells as well as T-helper Th17, Th1 and Th2 cells.

Its subcellular location is the cytoplasm. It is found in the nucleus. In terms of biological role, signal transducer and transcription activator that mediates cellular responses to interleukins, KITLG/SCF, LEP and other growth factors. Once activated, recruits coactivators, such as NCOA1 or MED1, to the promoter region of the target gene. May mediate cellular responses to activated FGFR1, FGFR2, FGFR3 and FGFR4. Upon activation of IL6ST/gp130 signaling by interleukin-6 (IL6), binds to the IL6-responsive elements identified in the promoters of various acute-phase protein genes. Activated by IL31 through IL31RA. Acts as a regulator of inflammatory response by regulating differentiation of naive CD4(+) T-cells into T-helper Th17 or regulatory T-cells (Treg): acetylation promotes its transcription activity and cell differentiation while deacetylation and oxidation of lysine residues by LOXL3 inhibits differentiation. Involved in cell cycle regulation by inducing the expression of key genes for the progression from G1 to S phase, such as CCND1. Mediates the effects of LEP on melanocortin production, body energy homeostasis and lactation. May play an apoptotic role by transctivating BIRC5 expression under LEP activation. Cytoplasmic STAT3 represses macroautophagy by inhibiting EIF2AK2/PKR activity. Plays a crucial role in basal beta cell functions, such as regulation of insulin secretion. Following JAK/STAT signaling activation and as part of a complex with NFATC3 and NFATC4, binds to the alpha-beta E4 promoter region of CRYAB and activates transcription in cardiomyocytes. In Homo sapiens (Human), this protein is Signal transducer and activator of transcription 3.